The following is a 1628-amino-acid chain: Lysine-specific histone demethylase 1 homolog 3 (1628 aa).

A disordered region spans residues 1 to 71 (MDGKEKKSGS…KKLSALGKDS (71 aa)). Acidic residues predominate over residues 19 to 28 (FDDDADDDEP). Residues 43 to 64 (KDKVETESTGKQRQKQVVEKKL) are compositionally biased toward basic and acidic residues. The SWIRM domain occupies 378 to 478 (GRAAAVTAGL…AGISSVNGKA (101 aa)). FAD contacts are provided by Glu647, Arg649, Arg655, and Glu1077. The tract at residues 1271–1317 (SGKKSLRQANTTNTSRIRRKLNSPDTDSKGKLSNGNDVKTDEEFEDN) is disordered.

This sequence belongs to the flavin monoamine oxidase family. FAD serves as cofactor.

Its function is as follows. Probable histone demethylase that reduces the levels of histone H3 'Lys-4' methylation in chromatin. This Arabidopsis thaliana (Mouse-ear cress) protein is Lysine-specific histone demethylase 1 homolog 3 (LDL3).